The sequence spans 292 residues: uncharacterized protein (292 aa).

Disordered regions lie at residues 29 to 50 (SEKP…LRDS) and 166 to 292 (VKRK…EELK). Residue Ser50 is modified to Phosphoserine. 2 stretches are compositionally biased toward polar residues: residues 176-189 (NSKN…PVNN) and 208-217 (GSPTNFSKLI). Over residues 221–239 (YKDEWLQQQKADSDRRTPK) the composition is skewed to basic and acidic residues. 2 stretches are compositionally biased toward polar residues: residues 240 to 250 (TSEASVSTQST) and 260 to 270 (DTETPQNSETP).

Phosphorylated upon DNA damage.

This is an uncharacterized protein from Rattus norvegicus (Rat).